The sequence spans 614 residues: Leucine-rich repeat and immunoglobulin-like domain-containing nogo receptor-interacting protein 1 (614 aa).

Positions 1 to 35 (MLAGGVRSMPSPLLACWQPILLLVLGSVLSGSATG) are cleaved as a signal peptide. Intrachain disulfides connect cysteine 36–cysteine 42 and cysteine 40–cysteine 51. The 30-residue stretch at 36–65 (CPPRCECSAQDRAVLCHRKRFVAVPEGIPT) folds into the LRRNT domain. Residues 36 to 555 (CPPRCECSAQ…FDIKTLIIAT (520 aa)) are Extracellular-facing. LRR repeat units lie at residues 66-87 (ETRLLDLGKNRIKTLNQDEFAS), 90-111 (HLEELELNENIVSAVEPGAFNN), 114-135 (NLRTLGLRSNRLKLIPLGVFTG), 138-159 (NLTKLDISENKIVILLDYMFQD), 162-183 (NLKSLEVGDNDLVYISHRAFSG), 186-207 (SLEQLTLEKCNLTSIPTEALSH), 210-231 (GLIVLRLRHLNINAIRDYSFKR), 258-279 (NLTSLSITHCNLTAVPYLAVRH), 282-303 (YLRFLNLSYNPISTIEGSMLHE), 306-327 (RLQEIQLVGGQLAVVEPYAFRG), and 330-351 (YLRVLNVSGNQLTTLEESVFHS). The N-linked (GlcNAc...) asparagine glycan is linked to asparagine 138. Asparagine 196 carries N-linked (GlcNAc...) asparagine glycosylation. Asparagine 258, asparagine 268, and asparagine 287 each carry an N-linked (GlcNAc...) asparagine glycan. An N-linked (GlcNAc...) asparagine glycan is attached at asparagine 335. Positions 363 to 417 (NPLACDCRLLWVFRRRWRLNFNRQQPTCATPEFVQGKEFKDFPDVLLPNYFTCRR) constitute an LRRCT domain. 3 disulfides stabilise this stretch: cysteine 367-cysteine 390, cysteine 369-cysteine 415, and cysteine 440-cysteine 491. The region spanning 405–507 (PDVLLPNYFT…GNDSMPAHLH (103 aa)) is the Ig-like C2-type domain. Asparagine 486, asparagine 499, asparagine 520, and asparagine 536 each carry an N-linked (GlcNAc...) asparagine glycan. A helical membrane pass occupies residues 556–576 (TMGFISFLGVVLFCLVLLFLW). Residues 577–614 (SRGKGNTKHNIEIEYVPRKSDAGISSADAPRKFNMKMI) are Cytoplasmic-facing. Phosphoserine is present on serine 596.

As to quaternary structure, homotetramer. Forms a ternary complex with RTN4R/NGFR and RTN4R/TNFRSF19. Interacts with NGRF, RTN4R and MYT1L. Post-translationally, N-glycosylated. Contains predominantly high-mannose glycans.

It localises to the cell membrane. Functionally, functional component of the Nogo receptor signaling complex (RTN4R/NGFR) in RhoA activation responsible for some inhibition of axonal regeneration by myelin-associated factors. Is also an important negative regulator of oligodentrocyte differentiation and axonal myelination. Acts in conjunction with RTN4 and RTN4R in regulating neuronal precursor cell motility during cortical development. The chain is Leucine-rich repeat and immunoglobulin-like domain-containing nogo receptor-interacting protein 1 (LINGO1) from Pongo abelii (Sumatran orangutan).